The chain runs to 251 residues: Gamma-glutamyl peptidase 5 (251 aa).

The Glutamine amidotransferase type-1 domain maps to 17–214 (STFVKKAYGG…IDRVVNLKLM (198 aa)). The Nucleophile role is filled by C101. Residues H193 and E195 contribute to the active site.

This sequence belongs to the peptidase C26 family.

The protein localises to the cytoplasm. It is found in the cytosol. Its pathway is secondary metabolite biosynthesis. Its function is as follows. Involved in glucosinolate biosynthesis. Hydrolyzes the gamma-glutamyl peptide bond of several glutathione (GSH) conjugates to produce Cys-Gly conjugates related to glucosinolates. The gamma-Glu-Cys-Gly-GSH conjugates are the sulfur-donating molecule in glucosinolate biosynthesis. This chain is Gamma-glutamyl peptidase 5, found in Arabidopsis thaliana (Mouse-ear cress).